The primary structure comprises 253 residues: Chorismate mutase 2, cytosolic (253 aa).

One can recognise a Chorismate mutase domain in the interval 2–253; the sequence is DAAGGDQLSL…EVEYLLRRLD (252 aa).

Homodimer. Interacts with Cmu1 of the fungal pathogen Ustilago maydis.

The protein resides in the cytoplasm. It localises to the cytosol. The enzyme catalyses chorismate = prephenate. It participates in metabolic intermediate biosynthesis; prephenate biosynthesis; prephenate from chorismate: step 1/1. With respect to regulation, no allosteric regulation. The sequence is that of Chorismate mutase 2, cytosolic from Zea mays (Maize).